The primary structure comprises 674 residues: Enzymatic polyprotein (674 aa).

The interval 40-130 is protease; sequence IELHCFVDTG…CQLYEPFIQF (91 aa). Residue aspartate 47 is part of the active site. The Reverse transcriptase domain occupies 267-447; the sequence is LKVIKPSKSP…KKINFLGLEI (181 aa).

The protein belongs to the caulimoviridae enzymatic polyprotein family.

It carries out the reaction DNA(n) + a 2'-deoxyribonucleoside 5'-triphosphate = DNA(n+1) + diphosphate. In terms of biological role, encodes for at least two polypeptides: protease (PR) and reverse transcriptase (RT). The protease processes the polyprotein in cis. Reverse transcriptase is multifunctional enzyme that converts the viral RNA genome into dsDNA in viral cytoplasmic capsids. This enzyme displays a DNA polymerase activity that can copy either DNA or RNA templates, and a ribonuclease H (RNase H) activity that cleaves the RNA strand of RNA-DNA heteroduplexes in a partially processive 3'- to 5'-endonucleasic mode. Neo-synthesized pregenomic RNA (pgRNA) are encapsidated, and reverse-transcribed inside the nucleocapsid. Partial (+)DNA is synthesized from the (-)DNA template and generates the relaxed circular DNA (RC-DNA) genome. After budding and infection, the RC-DNA migrates in the nucleus, and is converted into a plasmid-like covalently closed circular DNA (cccDNA). The sequence is that of Enzymatic polyprotein from Arabidopsis thaliana (Mouse-ear cress).